Reading from the N-terminus, the 70-residue chain is Cytochrome c oxidase subunit 8B, mitochondrial (70 aa).

The N-terminal 24 residues, 1 to 24, are a transit peptide targeting the mitochondrion; it reads MPRLPPILRLLQAPEKYTVIPKAR. The Mitochondrial matrix segment spans residues 25 to 35; sequence ISSKPAKSPTS. The helical transmembrane segment at 36 to 59 threads the bilayer; it reads AMDQAVGMSVIIAGFMVPAGWVLS. Topologically, residues 60-70 are mitochondrial intermembrane; it reads HLESYKRSSAA.

It belongs to the cytochrome c oxidase VIII family. In terms of assembly, component of the cytochrome c oxidase (complex IV, CIV), a multisubunit enzyme composed of 14 subunits. The complex is composed of a catalytic core of 3 subunits MT-CO1, MT-CO2 and MT-CO3, encoded in the mitochondrial DNA, and 11 supernumerary subunits COX4I, COX5A, COX5B, COX6A, COX6B, COX6C, COX7A, COX7B, COX7C, COX8 and NDUFA4, which are encoded in the nuclear genome. The complex exists as a monomer or a dimer and forms supercomplexes (SCs) in the inner mitochondrial membrane with NADH-ubiquinone oxidoreductase (complex I, CI) and ubiquinol-cytochrome c oxidoreductase (cytochrome b-c1 complex, complex III, CIII), resulting in different assemblies (supercomplex SCI(1)III(2)IV(1) and megacomplex MCI(2)III(2)IV(2)).

The protein resides in the mitochondrion inner membrane. The protein operates within energy metabolism; oxidative phosphorylation. In terms of biological role, component of the cytochrome c oxidase, the last enzyme in the mitochondrial electron transport chain which drives oxidative phosphorylation. The respiratory chain contains 3 multisubunit complexes succinate dehydrogenase (complex II, CII), ubiquinol-cytochrome c oxidoreductase (cytochrome b-c1 complex, complex III, CIII) and cytochrome c oxidase (complex IV, CIV), that cooperate to transfer electrons derived from NADH and succinate to molecular oxygen, creating an electrochemical gradient over the inner membrane that drives transmembrane transport and the ATP synthase. Cytochrome c oxidase is the component of the respiratory chain that catalyzes the reduction of oxygen to water. Electrons originating from reduced cytochrome c in the intermembrane space (IMS) are transferred via the dinuclear copper A center (CU(A)) of subunit 2 and heme A of subunit 1 to the active site in subunit 1, a binuclear center (BNC) formed by heme A3 and copper B (CU(B)). The BNC reduces molecular oxygen to 2 water molecules using 4 electrons from cytochrome c in the IMS and 4 protons from the mitochondrial matrix. In Rattus norvegicus (Rat), this protein is Cytochrome c oxidase subunit 8B, mitochondrial (Cox8b).